Reading from the N-terminus, the 202-residue chain is Ribosomal RNA small subunit methyltransferase G (202 aa).

S-adenosyl-L-methionine is bound by residues Gly-75, Phe-80, 125–126 (VQ), and Arg-139.

This sequence belongs to the methyltransferase superfamily. RNA methyltransferase RsmG family.

The protein localises to the cytoplasm. Functionally, specifically methylates the N7 position of a guanine in 16S rRNA. The chain is Ribosomal RNA small subunit methyltransferase G from Mesomycoplasma hyopneumoniae (strain J / ATCC 25934 / NCTC 10110) (Mycoplasma hyopneumoniae).